We begin with the raw amino-acid sequence, 243 residues long: Probable transcriptional regulatory protein LCABL_11860 (243 aa).

Positions 1–23 (MSGHSKWHNIQGRKNAQDSKRGK) are disordered.

Belongs to the TACO1 family.

The protein localises to the cytoplasm. The polypeptide is Probable transcriptional regulatory protein LCABL_11860 (Lacticaseibacillus casei (strain BL23) (Lactobacillus casei)).